The sequence spans 296 residues: Claudin-23 (296 aa).

Topologically, residues 1 to 2 are cytoplasmic; it reads MR. A helical transmembrane segment spans residues 3–23; it reads TPVVMTLGMVLTPCGLLLNLV. Residues 24–81 lie on the Extracellular side of the membrane; it reads STLAPGWRLVKGFLDQPVDVVLYQGLWDICREQSSRERECGQPDEWNYFQTQPVQVAR. Residues 82–102 traverse the membrane as a helical segment; sequence GLMITSLATTALGLLLASLGV. Residues 103 to 111 lie on the Cytoplasmic side of the membrane; that stretch reads RCWQDEPHY. Residues 112-132 traverse the membrane as a helical segment; the sequence is GLAGLSGVVFFVAGLFSLIPV. Over 133–160 the chain is Extracellular; it reads SWYNHFLSDPDVLAAPSSPVTVQVSYSL. The helical transmembrane segment at 161–181 threads the bilayer; it reads VLGYLGSCLLLLGGFSLALSF. Topologically, residues 182-296 are cytoplasmic; the sequence is APWCEERCRR…QNSLPCDSDL (115 aa). The disordered stretch occupies residues 224 to 296; the sequence is YSDGQHRPPP…QNSLPCDSDL (73 aa). The segment covering 273 to 284 has biased composition (low complexity); that stretch reads TSQGGSSSRSTR. Polar residues predominate over residues 285-296; the sequence is PCQNSLPCDSDL.

This sequence belongs to the claudin family.

The protein resides in the cell junction. Its subcellular location is the tight junction. It is found in the cell membrane. Its function is as follows. Plays a major role in tight junction-specific obliteration of the intercellular space, through calcium-independent cell-adhesion activity. The sequence is that of Claudin-23 (Cldn23) from Mus musculus (Mouse).